We begin with the raw amino-acid sequence, 1060 residues long: MPTIPGFSQIQFEGFCRFIDQGLTEELHKFPKIEDTDQEIEFQLFVETYQLVEPLIKERDAVYESLTYSSELYVSAGLIWKTGRDMQEQTIFIGNIPLMNSLGNSIVSGIYRIVINQILQSPGIYYRSELDHNGISVYTGTIISDWGGRPELEIDRKARIWARVSRKQKISILVPSSAMGSNLREILDNVCYPEIFLSFPNDKEKKKIGSRENAILEFYKQFACVGGDPVFSESLCKELQKKFFQQRCELGRIGRRNMNRRLNIDIPQNNTFLLPRDVLAVVDHLIGMKFGMGTLDDMNHLKNKRIRSVADLLQDQFGLALVRLENAVRGTICGAIRHKLIPTPHNLVTSTPLTTTYESFFGLHPLSQVLDRTNPLTQIVHGRKSSYLGPGGLTGRTASFRIRDIHPSHYGRICPIDTSEGINVGLIGSLAIHARIGHWGSIESPFYEISEKSKEIVYLPPSRDEYYMVAAGNSLALNRGIQEEQVVPARYRQEFLTIAWEQIHLRSIFPFQYFSIGASLIPFIEHNDANRALMSSNMQRQAVPLSRSEKCIVGTGLEGQAALDSGVSAIAEHEGKIIYTDTDKIVLSGNRDTISIPLVMYQRSNKNTCMHQKPRVPRGKCIKKGQILADGAATVGGELALGKNVLVAHMPWEGYNSEDAVLISERLIYGDIYTSFHIRKYEIQTHVTSQGPERITNEIPHLEAHLLRNLDKNGIVMLGSWIERGDILVGKLTPQAAKESSYAPEDRLLRAILGIQVSTAKETCLKLPIGGRGRVIDVRWIQKKGGSSYNPETIRVSILQKREIKVGDKVAGRHGNKGIVSKILPRQDMPYLQDGTPVDMVFNPLGVPSRMNVGQMFECSLGLAGYLLDKHYRIAPFDERYEQEASRKLVFPELYSASKQTVNPWVFEPEYPGKSRIFDGRTGDPFEQPVIIGKSYILKLIHQVDDKIHGRSSGHYALVTQQPLRGRAKQGGQRVGEMEVWALEGFGVAHISQEMLTYKSDHIRARQEVLGATIIGGTIPKPEDAPESFRLLVRELRSLALELNHFLVSEKNFQINRKEA.

This sequence belongs to the RNA polymerase beta chain family. In terms of assembly, in plastids the minimal PEP RNA polymerase catalytic core is composed of four subunits: alpha, beta, beta', and beta''. When a (nuclear-encoded) sigma factor is associated with the core the holoenzyme is formed, which can initiate transcription.

It localises to the plastid. Its subcellular location is the chloroplast. It catalyses the reaction RNA(n) + a ribonucleoside 5'-triphosphate = RNA(n+1) + diphosphate. In terms of biological role, DNA-dependent RNA polymerase catalyzes the transcription of DNA into RNA using the four ribonucleoside triphosphates as substrates. The polypeptide is DNA-directed RNA polymerase subunit beta (Calycanthus floridus var. glaucus (Eastern sweetshrub)).